An 824-amino-acid polypeptide reads, in one-letter code: Leucine--tRNA ligase (824 aa).

The 'HIGH' region motif lies at 42 to 52; that stretch reads PYPSGRIHMGH. A 'KMSKS' region motif is present at residues 581–585; the sequence is KMSKS. Lys584 lines the ATP pocket.

It belongs to the class-I aminoacyl-tRNA synthetase family.

It localises to the cytoplasm. The catalysed reaction is tRNA(Leu) + L-leucine + ATP = L-leucyl-tRNA(Leu) + AMP + diphosphate. This is Leucine--tRNA ligase from Geotalea daltonii (strain DSM 22248 / JCM 15807 / FRC-32) (Geobacter daltonii).